A 136-amino-acid polypeptide reads, in one-letter code: Cytokine-like protein 1 (136 aa).

An N-terminal signal peptide occupies residues 1–22 (MRTPGPLPVLLLLLAGAPAARP).

In terms of tissue distribution, specifically expressed in CD34+ hematopoietic cells.

Its subcellular location is the secreted. In Homo sapiens (Human), this protein is Cytokine-like protein 1 (CYTL1).